A 722-amino-acid chain; its full sequence is Putative tyrosine-protein kinase in cps region (722 aa).

2 helical membrane passes run 31–53 (IIIA…ATPI) and 427–449 (IVVL…VRIL).

Belongs to the etk/wzc family. Autophosphorylated on tyrosine residue(s).

Its subcellular location is the cell inner membrane. The catalysed reaction is L-tyrosyl-[protein] + ATP = O-phospho-L-tyrosyl-[protein] + ADP + H(+). It functions in the pathway glycan metabolism; exopolysaccharide biosynthesis. The protein is Putative tyrosine-protein kinase in cps region of Klebsiella pneumoniae.